The primary structure comprises 366 residues: Methylthioribose-1-phosphate isomerase (366 aa).

Substrate contacts are provided by residues 53–55, Arg90, and Gln203; that span reads RGA. The active-site Proton donor is the Asp244. 254–255 is a binding site for substrate; it reads NK.

The protein belongs to the eIF-2B alpha/beta/delta subunits family. MtnA subfamily.

The catalysed reaction is 5-(methylsulfanyl)-alpha-D-ribose 1-phosphate = 5-(methylsulfanyl)-D-ribulose 1-phosphate. It participates in amino-acid biosynthesis; L-methionine biosynthesis via salvage pathway; L-methionine from S-methyl-5-thio-alpha-D-ribose 1-phosphate: step 1/6. Its function is as follows. Catalyzes the interconversion of methylthioribose-1-phosphate (MTR-1-P) into methylthioribulose-1-phosphate (MTRu-1-P). This Methylocella silvestris (strain DSM 15510 / CIP 108128 / LMG 27833 / NCIMB 13906 / BL2) protein is Methylthioribose-1-phosphate isomerase.